Here is a 2225-residue protein sequence, read N- to C-terminus: Multifunctional protein CAD (2225 aa).

Position 2 is an N-acetylalanine (Ala-2). The segment at 2–365 is GATase (Glutamine amidotransferase); sequence AALVLEDGSV…TVREAVAGNP (364 aa). L-glutamine is bound by residues Ser-44, Gly-222, and Gly-224. The Glutamine amidotransferase type-1 domain maps to 177 to 363; it reads RICALDCGLK…LETVREAVAG (187 aa). Residue Cys-252 is the Nucleophile; for GATase activity of the active site. L-glutamine-binding residues include Leu-253, Gln-256, Asn-294, Gly-296, and Phe-297. Residues His-336 and Glu-338 each act as for GATase activity in the active site. A linker region spans residues 366–394; it reads GGQTVKERLVQRLCPPGLLIPGSGLPPPR. A CPSase A region spans residues 395 to 933; sequence KVLILGSGGL…NTHDLDFRTP (539 aa). The interval 395-1455 is CPSase (Carbamoyl phosphate synthase); it reads KVLILGSGGL…APPLKVHVDC (1061 aa). Thr-456 is modified (phosphothreonine; by MAPK1). Positions 515, 555, 561, 562, 592, 599, 625, 626, 627, 668, and 682 each coordinate ATP. The 193-residue stretch at 519–711 folds into the ATP-grasp 1 domain; sequence AARMAEIGEH…LAYVAAKLAL (193 aa). Mg(2+) contacts are provided by Gln-668, Glu-682, and Asn-684. The Mn(2+) site is built by Gln-668, Glu-682, and Asn-684. The residue at position 747 (Lys-747) is an N6-acetyllysine. The CPSase B stretch occupies residues 934 to 1455; the sequence is HVLVLGSGVY…APPLKVHVDC (522 aa). Ser-1038 is subject to Phosphoserine. The 192-residue stretch at 1052–1243 folds into the ATP-grasp 2 domain; that stretch reads SRLLDTIGIS…LVALATRIIM (192 aa). The ATP site is built by Arg-1088, Lys-1127, Ile-1129, Glu-1134, Gly-1159, Val-1160, His-1161, Ser-1162, Gln-1202, and Glu-1214. Residues Gln-1202, Glu-1214, and Asn-1216 each coordinate Mg(2+). Mn(2+)-binding residues include Gln-1202, Glu-1214, and Asn-1216. The MGS-like domain maps to 1308-1462; sequence FKIPKKNILL…VDCMTSQKLV (155 aa). At Ser-1406 the chain carries Phosphoserine; by PKA. Residue Lys-1411 is modified to N6-acetyllysine. The tract at residues 1456–1788 is DHOase (dihydroorotase); it reads MTSQKLVRLP…VKGTIRRVVL (333 aa). Positions 1471 and 1473 each coordinate Zn(2+). 2 residues coordinate (S)-dihydroorotate: Arg-1475 and Asn-1505. 5 residues coordinate Zn(2+): Lys-1556, His-1590, Cys-1613, His-1614, and Glu-1637. Lys-1556 carries the post-translational modification N6-carboxylysine. Arg-1661 contacts (S)-dihydroorotate. Asp-1686 provides a ligand contact to Zn(2+). The active-site For DHOase activity is the Asp-1686. Residues His-1690 and Pro-1702 each coordinate (S)-dihydroorotate. The segment at 1789 to 1917 is linker; the sequence is RGEVAYIDGQ…GLLHPQTSPL (129 aa). A disordered region spans residues 1813-1911; sequence PQGAVPQPPP…QNLGSSGLLH (99 aa). Low complexity predominate over residues 1825 to 1834; the sequence is PATTEITTTP. Residue Ser-1859 is modified to Phosphoserine; by RPS6KB1 and PKA. Basic and acidic residues predominate over residues 1866–1878; it reads EEPKEKPSRKVVE. Ser-1873 carries the phosphoserine; by PKC; in vitro modification. A Phosphothreonine modification is found at Thr-1884. Polar residues predominate over residues 1899–1911; sequence ASPQNLGSSGLLH. 2 positions are modified to phosphoserine: Ser-1900 and Ser-1938. The segment at 1918-2225 is ATCase (Aspartate transcarbamylase); the sequence is LHSLVGQHIL…ALLATVLGRF (308 aa). 2 residues coordinate carbamoyl phosphate: Arg-1975 and Thr-1976. Lys-2003 is a binding site for L-aspartate. Residues Arg-2024, His-2052, and Gln-2055 each contribute to the carbamoyl phosphate site. L-aspartate is bound by residues Arg-2085 and Arg-2146. The carbamoyl phosphate site is built by Met-2185 and Pro-2186.

This sequence in the N-terminal section; belongs to the CarA family. It in the 2nd section; belongs to the CarB family. The protein in the 3rd section; belongs to the metallo-dependent hydrolases superfamily. DHOase family. CAD subfamily. In the C-terminal section; belongs to the aspartate/ornithine carbamoyltransferase superfamily. ATCase family. As to quaternary structure, homohexamer. Interacts with CIPC. Zn(2+) serves as cofactor. Mg(2+) is required as a cofactor. Requires Mn(2+) as cofactor. Post-translationally, activated by MAP kinase (Erk1/2) phosphorylation just prior to the S phase of the cell cycle, when the demand for pyrimidine nucleotides is greatest, and down-regulated as the cells emerge from S phase by protein kinase A (PKA) phosphorylation. Phosphorylation at Ser-1859 by RPS6KB1 downstream of MTOR promotes oligomerization and stimulates dihydroorotase activity. Phosphorylation at Ser-1406 reduces sensitivity to feedback inhibition by UTP.

The protein localises to the cytoplasm. It localises to the nucleus. It catalyses the reaction hydrogencarbonate + L-glutamine + 2 ATP + H2O = carbamoyl phosphate + L-glutamate + 2 ADP + phosphate + 2 H(+). It carries out the reaction L-glutamine + H2O = L-glutamate + NH4(+). The enzyme catalyses hydrogencarbonate + NH4(+) + 2 ATP = carbamoyl phosphate + 2 ADP + phosphate + 2 H(+). The catalysed reaction is carbamoyl phosphate + L-aspartate = N-carbamoyl-L-aspartate + phosphate + H(+). It catalyses the reaction (S)-dihydroorotate + H2O = N-carbamoyl-L-aspartate + H(+). It participates in pyrimidine metabolism; UMP biosynthesis via de novo pathway; (S)-dihydroorotate from bicarbonate: step 1/3. Its pathway is pyrimidine metabolism; UMP biosynthesis via de novo pathway; (S)-dihydroorotate from bicarbonate: step 2/3. The protein operates within pyrimidine metabolism; UMP biosynthesis via de novo pathway; (S)-dihydroorotate from bicarbonate: step 3/3. Its activity is regulated as follows. Allosterically regulated and controlled by phosphorylation. 5-phosphoribose 1-diphosphate (PRPP) is an activator while UMP and UTP are inhibitors of the CPSase reaction. Its function is as follows. Multifunctional protein that encodes the first 3 enzymatic activities of the de novo pyrimidine pathway: carbamoylphosphate synthetase (CPSase; EC 6.3.5.5), aspartate transcarbamylase (ATCase; EC 2.1.3.2) and dihydroorotase (DHOase; EC 3.5.2.3). The CPSase-function is accomplished in 2 steps, by a glutamine-dependent amidotransferase activity (GATase) that binds and cleaves glutamine to produce ammonia, followed by an ammonium-dependent carbamoyl phosphate synthetase, which reacts with the ammonia, hydrogencarbonate and ATP to form carbamoyl phosphate. The endogenously produced carbamoyl phosphate is sequestered and channeled to the ATCase active site. ATCase then catalyzes the formation of carbamoyl-L-aspartate from L-aspartate and carbamoyl phosphate. In the last step, DHOase catalyzes the cyclization of carbamoyl aspartate to dihydroorotate. The chain is Multifunctional protein CAD (CAD) from Mesocricetus auratus (Golden hamster).